The following is a 92-amino-acid chain: UPF0213 protein M28_Spy1146 (92 aa).

In terms of domain architecture, GIY-YIG spans 4-80 (KKAYMYVLEC…KRKTRSQKLA (77 aa)).

This sequence belongs to the UPF0213 family.

The chain is UPF0213 protein M28_Spy1146 from Streptococcus pyogenes serotype M28 (strain MGAS6180).